The chain runs to 89 residues: Small ribosomal subunit protein uS15 (89 aa).

This sequence belongs to the universal ribosomal protein uS15 family. As to quaternary structure, part of the 30S ribosomal subunit. Forms a bridge to the 50S subunit in the 70S ribosome, contacting the 23S rRNA.

In terms of biological role, one of the primary rRNA binding proteins, it binds directly to 16S rRNA where it helps nucleate assembly of the platform of the 30S subunit by binding and bridging several RNA helices of the 16S rRNA. Its function is as follows. Forms an intersubunit bridge (bridge B4) with the 23S rRNA of the 50S subunit in the ribosome. The polypeptide is Small ribosomal subunit protein uS15 (Alcanivorax borkumensis (strain ATCC 700651 / DSM 11573 / NCIMB 13689 / SK2)).